Consider the following 167-residue polypeptide: Alanine- and arginine-rich domain-containing protein (167 aa).

The segment at 140–167 (LKKRQDQELASKPQSPQDKEMNSECGSA) is disordered.

Preferentially expressed in testis both in embryo and adult. Expressed at much lower level in other tissues.

The chain is Alanine- and arginine-rich domain-containing protein (Aard) from Mus musculus (Mouse).